The following is a 1025-amino-acid chain: Rho GTPase-activating protein Graf (1025 aa).

The 118-residue stretch at 271-388 (IFTKRGYLFL…WISAMDGTEP (118 aa)) folds into the PH domain. Residues 402–589 (YHLDEAGFMF…ILIDNYERIF (188 aa)) enclose the Rho-GAP domain. The disordered stretch occupies residues 824-866 (GSASGPQQHPPVQRGLHSYGQTKHYSPLMPTSTSSSNDSVCDS). Low complexity predominate over residues 854–866 (TSTSSSNDSVCDS). Residues 963–1023 (TGTARVRTLY…PENYVEHLKP (61 aa)) enclose the SH3 domain.

As to quaternary structure, interacts with Egfr (when ubiquitinated). In terms of tissue distribution, in the adult brain, expressed in the antennal lobe, the subesophageal ganglion and the alpha/beta neurons of the mushroom body.

The protein resides in the cytoplasm. The protein localises to the cytosol. It is found in the cytoplasmic vesicle. In terms of biological role, GTPase-activating protein for Rho family proteins. Essential component of the CLIC (clathrin-independent carrier)/GEEC (GPI-anchored protein-enriched early endocytic compartment) endocytic pathway. During hematopoiesis, inhibits Egfr-ras-MAPK signaling by promoting Spi-induced Egfr internalization through CLIC/GEEC endocytosis, thereby preventing plasmatocyte overproliferation. Essential for normal mushroom body (MB) development and consequently the formation of olfactory long-term memories. During MD development, required to stop the MB beta-lobe from crossing the brain midline, possibly acting via its role in the CLIC/GEEC endocytic pathway to down-regulate the Egfr-ras-MAPK signaling at the tip of the beta-lobes. Required during embryo cellularization for maintaining and regulating the rate of actomyosin ring constriction. During cellularization, inhibits Rho-GTP levels at the furrow canal tip in a spatiotemporal manner, thus delaying the onset of actomyosin contraction and ensuring appropriate closure of the cells at the base of nuclei after membrane extension. This Drosophila melanogaster (Fruit fly) protein is Rho GTPase-activating protein Graf.